Reading from the N-terminus, the 124-residue chain is Small ribosomal subunit protein uS12 (124 aa).

Aspartate 89 is modified (3-methylthioaspartic acid). The tract at residues 104–124 is disordered; it reads TDGVENRKQSRSKYGTKRPKK. The segment covering 112–124 has biased composition (basic residues); that stretch reads QSRSKYGTKRPKK.

Belongs to the universal ribosomal protein uS12 family. In terms of assembly, part of the 30S ribosomal subunit. Contacts proteins S8 and S17. May interact with IF1 in the 30S initiation complex.

Its function is as follows. With S4 and S5 plays an important role in translational accuracy. Functionally, interacts with and stabilizes bases of the 16S rRNA that are involved in tRNA selection in the A site and with the mRNA backbone. Located at the interface of the 30S and 50S subunits, it traverses the body of the 30S subunit contacting proteins on the other side and probably holding the rRNA structure together. The combined cluster of proteins S8, S12 and S17 appears to hold together the shoulder and platform of the 30S subunit. The sequence is that of Small ribosomal subunit protein uS12 from Thermosipho melanesiensis (strain DSM 12029 / CIP 104789 / BI429).